The following is a 285-amino-acid chain: Secreted alkaline triacylglycerol lipase (285 aa).

Positions 1–20 (MLFNYQSLLVGVSLISQALS) are cleaved as a signal peptide. S159 (nucleophile) is an active-site residue. Catalysis depends on charge relay system residues D215 and H268.

It belongs to the AB hydrolase superfamily. FaeA family.

It is found in the secreted. It catalyses the reaction a triacylglycerol + H2O = a diacylglycerol + a fatty acid + H(+). Its function is as follows. Secreted alkaline lipase that hydrolyzes acylglycerol lipids such as triacylglycerols and consequently releases free fatty acid. Is able to hydrolyze tributyrin (1,2,3-tributyryl-glycerin). This Penicillium cyclopium protein is Secreted alkaline triacylglycerol lipase.